Reading from the N-terminus, the 172-residue chain is Adenine phosphoribosyltransferase (172 aa).

Belongs to the purine/pyrimidine phosphoribosyltransferase family. Homodimer.

Its subcellular location is the cytoplasm. The enzyme catalyses AMP + diphosphate = 5-phospho-alpha-D-ribose 1-diphosphate + adenine. It functions in the pathway purine metabolism; AMP biosynthesis via salvage pathway; AMP from adenine: step 1/1. Catalyzes a salvage reaction resulting in the formation of AMP, that is energically less costly than de novo synthesis. This is Adenine phosphoribosyltransferase from Gloeothece citriformis (strain PCC 7424) (Cyanothece sp. (strain PCC 7424)).